Consider the following 847-residue polypeptide: Acyl-homoserine lactone acylase QuiP (847 aa).

An N-terminal signal peptide occupies residues 1-26 (MASPAFMRFLPRCGAAAAFGTLLGLA). The active-site Nucleophile is Ser265.

This sequence belongs to the peptidase S45 family. In terms of assembly, heterodimer of an alpha subunit and a beta subunit processed from the same precursor.

The protein localises to the periplasm. The catalysed reaction is an N-acyl-L-homoserine lactone + H2O = L-homoserine lactone + a carboxylate. Its function is as follows. Catalyzes the deacylation of acyl-homoserine lactone (AHL or acyl-HSL), releasing homoserine lactone (HSL) and the corresponding fatty acid. Possesses a specificity for the degradation of long-chain acyl-HSLs (side chains of seven or more carbons in length). Appears to be the acyl-HSL acylase that underlies the ability of P.aeruginosa to degrade and utilize certain acyl-HSLs as growth nutrients, including one of its own quorum signals, 3-oxo-C12-HSL. Is thought to have a role in quorum quenching. In Pseudomonas aeruginosa (strain ATCC 15692 / DSM 22644 / CIP 104116 / JCM 14847 / LMG 12228 / 1C / PRS 101 / PAO1), this protein is Acyl-homoserine lactone acylase QuiP (quiP).